Here is a 146-residue protein sequence, read N- to C-terminus: Large ribosomal subunit protein uL15 (146 aa).

The tract at residues 1–51 (MKLHELQPAPGSRKKAVRVGRGIGSGNGKTSGRGQKGQNARSGGGVRLGFE) is disordered. Composition is skewed to gly residues over residues 21–35 (RGIG…GRGQ) and 42–51 (SGGGVRLGFE).

This sequence belongs to the universal ribosomal protein uL15 family. Part of the 50S ribosomal subunit.

Functionally, binds to the 23S rRNA. The protein is Large ribosomal subunit protein uL15 of Geobacillus kaustophilus (strain HTA426).